A 265-amino-acid polypeptide reads, in one-letter code: Hydroxyethylthiazole kinase (265 aa).

M50 contacts substrate. 2 residues coordinate ATP: R125 and T171. G198 is a substrate binding site.

The protein belongs to the Thz kinase family. It depends on Mg(2+) as a cofactor.

The catalysed reaction is 5-(2-hydroxyethyl)-4-methylthiazole + ATP = 4-methyl-5-(2-phosphooxyethyl)-thiazole + ADP + H(+). Its pathway is cofactor biosynthesis; thiamine diphosphate biosynthesis; 4-methyl-5-(2-phosphoethyl)-thiazole from 5-(2-hydroxyethyl)-4-methylthiazole: step 1/1. In terms of biological role, catalyzes the phosphorylation of the hydroxyl group of 4-methyl-5-beta-hydroxyethylthiazole (THZ). This is Hydroxyethylthiazole kinase from Salmonella agona (strain SL483).